Consider the following 519-residue polypeptide: Nif-specific regulatory protein (519 aa).

Positions I177–T405 constitute a Sigma-54 factor interaction domain. ATP-binding positions include G205–E212 and A268–E277. The inter-domain linker stretch occupies residues L406–E476. Residues C419 and C424 each contribute to the a divalent metal cation site. A C-terminal DNA-binding domain region spans residues R477–E519. The H-T-H motif DNA-binding region spans Q491 to R510.

In terms of assembly, interacts with sigma-54.

Required for activation of most nif operons, which are directly involved in nitrogen fixation. The sequence is that of Nif-specific regulatory protein (nifA) from Rhizobium leguminosarum.